The chain runs to 256 residues: Thrombin-like enzyme cerastocytin (256 aa).

Residues 1–18 form the signal peptide; that stretch reads MVLISVLASLLVLQLSYA. Residues 19–24 constitute a propeptide that is removed on maturation; that stretch reads QKSSEL. One can recognise a Peptidase S1 domain in the interval 25–247; it reads VIGGAECNIN…YTDWIRNIIA (223 aa). Intrachain disulfides connect cysteine 31–cysteine 161, cysteine 98–cysteine 254, cysteine 140–cysteine 208, cysteine 172–cysteine 187, and cysteine 198–cysteine 223. N-linked (GlcNAc...) asparagine glycosylation is present at asparagine 44. Catalysis depends on charge relay system residues histidine 65 and aspartate 108. N-linked (GlcNAc...) asparagine glycans are attached at residues asparagine 119, asparagine 120, and asparagine 152. Serine 202 (charge relay system) is an active-site residue.

It belongs to the peptidase S1 family. Snake venom subfamily. Monomer. Expressed by the venom gland.

The protein resides in the secreted. Its activity is regulated as follows. Its platelets aggregating activity is inhibited by chlorpromazine, theophylline mepacrine. Its platelet aggregating activity and its amidolytic activity are inhibited by PMSF, TPCK, TLCK and soybean trypsin inhibitors. Is unaffected by hirudin or by antithrombin-III in the presence of heparin. In terms of biological role, thrombin-like snake venom serine protease which potently induces platelet aggregation and has fibrinogenolytic activities. Clots purified fibrinogen and hydrolyzes alpha-chains (FGA). High concentrations of this enzyme also cleave prothrombin (F2) and factor X (F10). Is also able to activate factor XIII (F8). This Cerastes cerastes (Horned desert viper) protein is Thrombin-like enzyme cerastocytin.